Here is a 266-residue protein sequence, read N- to C-terminus: Elongation factor Ts (266 aa).

The segment at threonine 80 to valine 83 is involved in Mg(2+) ion dislocation from EF-Tu.

This sequence belongs to the EF-Ts family.

The protein localises to the cytoplasm. Associates with the EF-Tu.GDP complex and induces the exchange of GDP to GTP. It remains bound to the aminoacyl-tRNA.EF-Tu.GTP complex up to the GTP hydrolysis stage on the ribosome. The protein is Elongation factor Ts of Buchnera aphidicola subsp. Baizongia pistaciae (strain Bp).